The sequence spans 492 residues: N-succinylglutamate 5-semialdehyde dehydrogenase (492 aa).

NAD(+) is bound at residue 220–225 (GSASTG). Active-site residues include glutamate 243 and cysteine 277.

Belongs to the aldehyde dehydrogenase family. AstD subfamily.

The catalysed reaction is N-succinyl-L-glutamate 5-semialdehyde + NAD(+) + H2O = N-succinyl-L-glutamate + NADH + 2 H(+). Its pathway is amino-acid degradation; L-arginine degradation via AST pathway; L-glutamate and succinate from L-arginine: step 4/5. Catalyzes the NAD-dependent reduction of succinylglutamate semialdehyde into succinylglutamate. The protein is N-succinylglutamate 5-semialdehyde dehydrogenase of Salmonella dublin (strain CT_02021853).